Reading from the N-terminus, the 400-residue chain is Argininosuccinate synthase (400 aa).

ATP-binding positions include 10–18 (AYSGGVDTS) and A38. Residue Y89 participates in L-citrulline binding. An ATP-binding site is contributed by G119. Residues T121, N125, and D126 each contribute to the L-aspartate site. N125 lines the L-citrulline pocket. R129, S177, S186, E262, and Y274 together coordinate L-citrulline.

Belongs to the argininosuccinate synthase family. Type 1 subfamily. Homotetramer.

It localises to the cytoplasm. The enzyme catalyses L-citrulline + L-aspartate + ATP = 2-(N(omega)-L-arginino)succinate + AMP + diphosphate + H(+). Its pathway is amino-acid biosynthesis; L-arginine biosynthesis; L-arginine from L-ornithine and carbamoyl phosphate: step 2/3. This Prochlorococcus marinus (strain NATL1A) protein is Argininosuccinate synthase.